The following is an 863-amino-acid chain: Protein translocase subunit SecA (863 aa).

Residues Gln-88, 106-110, and Asp-507 contribute to the ATP site; that span reads GEGKT. The segment at 806–863 is disordered; that stretch reads KSHEQNEQFLSNTTESGVNENGEAQITKVPRNSPCPCGSGKKYKECHGKSGPKKGILA. Residues 812–829 show a composition bias toward polar residues; that stretch reads EQFLSNTTESGVNENGEA. Zn(2+) contacts are provided by Cys-840, Cys-842, Cys-851, and His-852.

It belongs to the SecA family. In terms of assembly, monomer and homodimer. Part of the essential Sec protein translocation apparatus which comprises SecA, SecYEG and auxiliary proteins SecDF-YajC and YidC. The cofactor is Zn(2+).

The protein localises to the cell inner membrane. Its subcellular location is the cytoplasm. It carries out the reaction ATP + H2O + cellular proteinSide 1 = ADP + phosphate + cellular proteinSide 2.. Its function is as follows. Part of the Sec protein translocase complex. Interacts with the SecYEG preprotein conducting channel. Has a central role in coupling the hydrolysis of ATP to the transfer of proteins into and across the cell membrane, serving as an ATP-driven molecular motor driving the stepwise translocation of polypeptide chains across the membrane. The chain is Protein translocase subunit SecA from Campylobacter lari (strain RM2100 / D67 / ATCC BAA-1060).